The following is a 255-amino-acid chain: 5-oxoprolinase subunit A (255 aa).

Belongs to the LamB/PxpA family. As to quaternary structure, forms a complex composed of PxpA, PxpB and PxpC.

The catalysed reaction is 5-oxo-L-proline + ATP + 2 H2O = L-glutamate + ADP + phosphate + H(+). Functionally, catalyzes the cleavage of 5-oxoproline to form L-glutamate coupled to the hydrolysis of ATP to ADP and inorganic phosphate. This is 5-oxoprolinase subunit A from Campylobacter jejuni subsp. doylei (strain ATCC BAA-1458 / RM4099 / 269.97).